Reading from the N-terminus, the 825-residue chain is MSMSHLYGKDEDSDGVEMENFEITDWDLQNEFNPNRRKHFQTKEEATYGMWAERDSDDERPSFGGKRSRDYSAPVNFISAGIRKPAAEEKSDSDSDSETQARRETFPKDFEAKKLRTGGNFKPSQRTFAGGIKSNTDFGSWERHTKGIGQKLLQKMGYVQGRGLGKNAQGIIAPIEAKQRKGKGAVGAYGSERTKQSIKDFPVVDSEEEEEKEFQKEMSQWRKDPGGGKKKPKYSYKTVEELKAKGKVGKSLSAPQKEISQVKVIDMTGREQKVYYSYSQLAHKHNIPGEAPGQGAKEEKPQGFALPELEHNLQLLIDMTEQEIIQNDRQLQYEQDMVVNLTHELEKLSEVLEREEKAIQNLSKVLETVEECERRIQPMCDNPLTLEECARIFEMLQDKYYEEYKMSEKADLSVAIVYPLMKDYFKDWNPLRDPTYGTDVMSKWKNLLEEGHLLSHSAHDASMDPYHRLLWETWVPLLRSIIAQWQPRNCAPMVDFLDCWVHLLPVWILDNILDQLIFPKLQKEVENWNPLTDTVPIHSWIHPWLPLMQSRLEPLFSPIRNKLANALQKWHPSDSSAKLILQPWKEVFTPGSWEAFMVKNILPKLGMCLSEFVINPHQQHMEVFHWVTDWEGMVSLSSIVGILEKHFFPKWLQVLCSWLSNNPNYEEITKWYLGWKSMFSDLVLAHPAIKDKFNEALDIMNRAVSSSVGAYMQPGARESIAYLTQTERRKDFQYEAMQERRDAESIAQRGIGAAAAVPMNFKDLIQSKAEEHNIVFMPLIGKRHEGKQLYNFNRIVIYIDRGVVFVQGEKTWVPTSLQSLIDMAK.

The tract at residues 1–135 (MSMSHLYGKD…RTFAGGIKSN (135 aa)) is disordered. Residues 11-25 (EDSDGVEMENFEITD) show a composition bias toward acidic residues. Basic and acidic residues-rich tracts occupy residues 41-61 (QTKE…DERP) and 85-114 (PAAE…EAKK). Residues 122 to 135 (KPSQRTFAGGIKSN) show a composition bias toward polar residues. The G-patch domain occupies 145-191 (TKGIGQKLLQKMGYVQGRGLGKNAQGIIAPIEAKQRKGKGAVGAYGS).

This sequence belongs to the TFP11/STIP family. Identified in the spliceosome C complex.

The protein resides in the nucleus. Involved in pre-mRNA splicing, specifically in spliceosome disassembly during late-stage splicing events. This chain is Tuftelin-interacting protein 11 (tfip11), found in Xenopus tropicalis (Western clawed frog).